The chain runs to 377 residues: tRNA pseudouridine synthase Pus10 (377 aa).

Asp-206 serves as the catalytic Nucleophile. Tyr-270 and Tyr-339 together coordinate substrate.

This sequence belongs to the pseudouridine synthase Pus10 family.

It carries out the reaction uridine(54) in tRNA = pseudouridine(54) in tRNA. The enzyme catalyses uridine(55) in tRNA = pseudouridine(55) in tRNA. Responsible for synthesis of pseudouridine from uracil-54 and uracil-55 in the psi GC loop of transfer RNAs. The protein is tRNA pseudouridine synthase Pus10 of Picrophilus torridus (strain ATCC 700027 / DSM 9790 / JCM 10055 / NBRC 100828 / KAW 2/3).